We begin with the raw amino-acid sequence, 213 residues long: ABA-inducible protein PHV A1 (213 aa).

Disordered regions lie at residues 1–158 (MASN…KDKT) and 182–213 (NTLGMGGDNTSATKDATTGATVKDTTTTTRNH). The segment covering 13–23 (GETKARTEEKT) has biased composition (basic and acidic residues). LEA 11-mer repeat repeat units lie at residues 27–37 (MGATKQKAGQT), 38–48 (TEATKQKAGET), 49–59 (AEATKQKTGET), 60–70 (AEAAKQKAAEA), 78–88 (AQAAKDKTYET), 89–99 (AQAAKERAAQG), 111–121 (TEAAKQKAAET), 122–132 (TEAAKQKAAEA), and 133–143 (TEAAKQKASDT). Residues 27–143 (MGATKQKAGQ…EAAKQKASDT (117 aa)) are 11 X 11 AA tandem repeats of T-E-A-A-K-Q-K-A-A-E-T. 3 stretches are compositionally biased toward basic and acidic residues: residues 41-74 (TKQKAGETAEATKQKTGETAEAAKQKAAEAKDKT), 81-98 (AKDKTYETAQAAKERAAQ), and 109-140 (EKTEAAKQKAAETTEAAKQKAAEATEAAKQKA). Positions 193–213 (ATKDATTGATVKDTTTTTRNH) are enriched in low complexity.

Belongs to the LEA type 4 family.

This Hordeum vulgare (Barley) protein is ABA-inducible protein PHV A1 (HVA1).